The chain runs to 906 residues: Protein translocase subunit SecA (906 aa).

ATP is bound by residues Q86, G104–T108, and D499. Residues K862 to R886 are disordered. Zn(2+) contacts are provided by C890, C892, C901, and H902.

Belongs to the SecA family. In terms of assembly, monomer and homodimer. Part of the essential Sec protein translocation apparatus which comprises SecA, SecYEG and auxiliary proteins SecDF-YajC and YidC. The cofactor is Zn(2+).

The protein resides in the cell inner membrane. It localises to the cytoplasm. It catalyses the reaction ATP + H2O + cellular proteinSide 1 = ADP + phosphate + cellular proteinSide 2.. Its function is as follows. Part of the Sec protein translocase complex. Interacts with the SecYEG preprotein conducting channel. Has a central role in coupling the hydrolysis of ATP to the transfer of proteins into and across the cell membrane, serving both as a receptor for the preprotein-SecB complex and as an ATP-driven molecular motor driving the stepwise translocation of polypeptide chains across the membrane. The protein is Protein translocase subunit SecA of Rickettsia africae (strain ESF-5).